The primary structure comprises 369 residues: Flagellar P-ring protein (369 aa).

Residues 1-22 (MIKLKQLIAATLLLSTAFGVHA) form the signal peptide.

This sequence belongs to the FlgI family. The basal body constitutes a major portion of the flagellar organelle and consists of four rings (L,P,S, and M) mounted on a central rod.

Its subcellular location is the periplasm. It is found in the bacterial flagellum basal body. Assembles around the rod to form the L-ring and probably protects the motor/basal body from shearing forces during rotation. The sequence is that of Flagellar P-ring protein from Pseudomonas syringae pv. syringae (strain B728a).